We begin with the raw amino-acid sequence, 220 residues long: NADH-quinone oxidoreductase subunit I (220 aa).

2 consecutive 4Fe-4S ferredoxin-type domains span residues 71 to 102 (LQRL…IITH) and 112 to 141 (DSYT…MGNR). [4Fe-4S] cluster is bound by residues C82, C85, C88, C92, C121, C124, C127, and C131. Positions 187–220 (MQATPLDYVQEPSKEESKEETPTNPESNKGDENV) are disordered. Basic and acidic residues predominate over residues 198–207 (PSKEESKEET).

This sequence belongs to the complex I 23 kDa subunit family. As to quaternary structure, NDH-1 is composed of 14 different subunits. Subunits NuoA, H, J, K, L, M, N constitute the membrane sector of the complex. The cofactor is [4Fe-4S] cluster.

The protein localises to the cell inner membrane. The enzyme catalyses a quinone + NADH + 5 H(+)(in) = a quinol + NAD(+) + 4 H(+)(out). In terms of biological role, NDH-1 shuttles electrons from NADH, via FMN and iron-sulfur (Fe-S) centers, to quinones in the respiratory chain. The immediate electron acceptor for the enzyme in this species is believed to be ubiquinone. Couples the redox reaction to proton translocation (for every two electrons transferred, four hydrogen ions are translocated across the cytoplasmic membrane), and thus conserves the redox energy in a proton gradient. The polypeptide is NADH-quinone oxidoreductase subunit I (Helicobacter pylori (strain Shi470)).